We begin with the raw amino-acid sequence, 777 residues long: Zinc finger FYVE domain-containing protein 1 (777 aa).

Residues 416–777 form a required for localization in the lipid droplets region; it reads MAHSSFFPDE…FNCNKKPGDL (362 aa). FYVE-type zinc fingers lie at residues 598–659 and 715–775; these read NSQI…EARN and DHEI…KKPG. Residues Cys-604, Cys-607, Cys-620, Cys-623, Cys-628, Cys-631, Cys-651, Cys-654, Cys-721, Cys-724, Cys-737, Cys-740, Cys-745, Cys-748, Cys-767, and Cys-770 each coordinate Zn(2+).

In terms of assembly, interacts with RAB18 (in GTP-bound form). Interacts with BSCL2 in a RAB18-dependent manner. Interacts with ZW10. As to quaternary structure, (Microbial infection) Interacts with SARS coronavirus-2/SARS-CoV-2 non-structural protein 6 (nsp6); the interaction is independent of PtdIns3P-binding and leads to endoplasmic reticulum (ER) and double membrane vesicles (DMVs) binding to lipid droplets. In terms of tissue distribution, highly expressed in heart. Also detected in the testis. Expressed in all tissues examined, including, brain, placenta, lung, liver, skeletal muscle, pancreas and kidney. Highly expressed in heart.

Its subcellular location is the golgi apparatus. It localises to the golgi stack. The protein resides in the endoplasmic reticulum. It is found in the lipid droplet. The protein localises to the preautophagosomal structure. Its subcellular location is the mitochondrion. Plays a role in the formation of lipid droplets (LDs) which are storage organelles at the center of lipid and energy homeostasis. Regulates the morphology, size and distribution of LDs. Mediates the formation of endoplasmic reticulum-lipid droplets (ER-LD) contacts by forming a complex with RAB18 and ZW10. Binds to phosphatidylinositol 3-phosphate (PtdIns3P) through FYVE-type zinc finger. Its function is as follows. (Microbial infection) Upon SARS coronavirus-2/SARS-CoV-2 infection, mediates through binding with non-structural protein 6 (nsp6) the replication organelle-lipid droplet association required to sustain viral replication. The polypeptide is Zinc finger FYVE domain-containing protein 1 (ZFYVE1) (Homo sapiens (Human)).